The primary structure comprises 160 residues: Transcription elongation factor GreA (160 aa).

The stretch at 1-31 forms a coiled coil; sequence MAEKTYPMTLEEKEKLEKELEELKLVRRPEI.

The protein belongs to the GreA/GreB family.

Necessary for efficient RNA polymerase transcription elongation past template-encoded arresting sites. The arresting sites in DNA have the property of trapping a certain fraction of elongating RNA polymerases that pass through, resulting in locked ternary complexes. Cleavage of the nascent transcript by cleavage factors such as GreA or GreB allows the resumption of elongation from the new 3'terminus. GreA releases sequences of 2 to 3 nucleotides. This chain is Transcription elongation factor GreA, found in Streptococcus suis (strain 98HAH33).